The primary structure comprises 393 residues: NAD(P)H-quinone oxidoreductase subunit H, chloroplastic (393 aa).

Belongs to the complex I 49 kDa subunit family. NDH is composed of at least 16 different subunits, 5 of which are encoded in the nucleus.

Its subcellular location is the plastid. It is found in the chloroplast thylakoid membrane. It carries out the reaction a plastoquinone + NADH + (n+1) H(+)(in) = a plastoquinol + NAD(+) + n H(+)(out). The catalysed reaction is a plastoquinone + NADPH + (n+1) H(+)(in) = a plastoquinol + NADP(+) + n H(+)(out). In terms of biological role, NDH shuttles electrons from NAD(P)H:plastoquinone, via FMN and iron-sulfur (Fe-S) centers, to quinones in the photosynthetic chain and possibly in a chloroplast respiratory chain. The immediate electron acceptor for the enzyme in this species is believed to be plastoquinone. Couples the redox reaction to proton translocation, and thus conserves the redox energy in a proton gradient. In Zea mays (Maize), this protein is NAD(P)H-quinone oxidoreductase subunit H, chloroplastic.